Consider the following 440-residue polypeptide: Cell division protein DivIB (440 aa).

Positions 1–10 (MMDDKTKNDQ) are enriched in basic and acidic residues. Disordered stretches follow at residues 1–97 (MMDD…DSNI) and 123–154 (QHQS…TQLK). The Cytoplasmic portion of the chain corresponds to 1 to 174 (MMDDKTKNDQ…RRKRQKRIQY (174 aa)). Acidic residues predominate over residues 12–21 (ESNEDKDELE). Residues 27-39 (TSKKRRQRKRSKA) are compositionally biased toward basic residues. Low complexity predominate over residues 78–87 (DSASSHANDN). Over residues 88–97 (NIDDSTDSNI) the composition is skewed to acidic residues. Residues 124-134 (HQSAPNEQNSD) show a composition bias toward polar residues. The chain crosses the membrane as a helical span at residues 175–195 (SVITILVLLIAVILIYMFSPL). A POTRA domain is found at 196–264 (SKIAHVNING…NTLNVDITEN (69 aa)). Topologically, residues 196–440 (SKIAHVNING…KINKQSSKNN (245 aa)) are extracellular. Residues 397–440 (YRGNTSTQSESDKNVTKSSQEENQAKEELQSVLNKINKQSSKNN) are disordered. Residues 406-425 (ESDKNVTKSSQEENQAKEEL) show a composition bias toward basic and acidic residues. Over residues 427-440 (SVLNKINKQSSKNN) the composition is skewed to polar residues.

The protein belongs to the FtsQ/DivIB family. DivIB subfamily.

It localises to the cell membrane. Functionally, cell division protein that may be involved in stabilizing or promoting the assembly of the division complex. The polypeptide is Cell division protein DivIB (Staphylococcus aureus (strain MRSA252)).